The sequence spans 209 residues: MMTTMRRHATTLALFAASTTAVTAVVNMLTEPTISHQAMLQQKMLLDQVVPAELYNSDIQKECYVVTNPALGSSAPHRVFIARQNGEPVAAALESTAPDGYSGAIRLLVGADFHGKVLGVRVTEHHETPGLGDKIEVRISDWITRFNGLMVQGEHDARWAVKKEGGMFDQFTGATITPRAVINSVKRSALYLQTLPPQINTLSACGENQ.

A helical transmembrane segment spans residues 9–29 (ATTLALFAASTTAVTAVVNML). T175 bears the FMN phosphoryl threonine mark.

Belongs to the RnfG family. In terms of assembly, the complex is composed of six subunits: RnfA, RnfB, RnfC, RnfD, RnfE and RnfG. FMN serves as cofactor.

It is found in the cell inner membrane. In terms of biological role, part of a membrane-bound complex that couples electron transfer with translocation of ions across the membrane. The chain is Ion-translocating oxidoreductase complex subunit G from Pectobacterium atrosepticum (strain SCRI 1043 / ATCC BAA-672) (Erwinia carotovora subsp. atroseptica).